The primary structure comprises 189 residues: MKRLIVGISGASGAIYGVRLLQVLRDVTDIETHLVMSQAARQTLSLETDFSLREVQALADVTHDARDIAASISSGSFQTLGMVILPCSIKTLSGIVHSYTDGLLTRAADVVLKERRPLVLCVRETPLHLGHLRLMTQAAEIGAVIMPPVPAFYHRPQSLDDVINQTVNRVLDQFAITLPEDLFARWQGA.

Residues 10–12, Ser37, 88–91, and Arg123 each bind FMN; these read GAS and SIKT. Positions 153 and 169 each coordinate dimethylallyl phosphate.

The protein belongs to the UbiX/PAD1 family.

It carries out the reaction dimethylallyl phosphate + FMNH2 = prenylated FMNH2 + phosphate. It functions in the pathway cofactor biosynthesis; ubiquinone biosynthesis. Flavin prenyltransferase that catalyzes the synthesis of the prenylated FMN cofactor (prenyl-FMN) for 4-hydroxy-3-polyprenylbenzoic acid decarboxylase UbiD. The prenyltransferase is metal-independent and links a dimethylallyl moiety from dimethylallyl monophosphate (DMAP) to the flavin N5 and C6 atoms of FMN. The protein is Flavin prenyltransferase UbiX of Escherichia coli O157:H7.